The primary structure comprises 574 residues: Probable amino-acid permease meu22 (574 aa).

Transmembrane regions (helical) follow at residues 69–89 (MIAIGGCVGTGLFVGSGNALA), 94–114 (ASILIAFAVIGTYVLFTTSAL), 173–193 (GPVSIWISVFYVIIIAINIWG), 202–222 (FFLSIMKVISVIGFVILSIII), 291–311 (IFWRIFLFYIVALFMLTLVVP), 391–411 (PIYAIAVTLLFGSIAYFTEAG), 412–432 (VGGALFGWLLSICGLSTTFIW), 470–490 (GVAMTILALIAQFYVAVFPIG), and 498–518 (FFQAYMAAPILIISFVAWKFF).

Belongs to the amino acid-polyamine-organocation (APC) superfamily.

It localises to the membrane. The protein is Probable amino-acid permease meu22 (meu22) of Schizosaccharomyces pombe (strain 972 / ATCC 24843) (Fission yeast).